Consider the following 444-residue polypeptide: Bystin (444 aa).

2 disordered regions span residues 1 to 37 (MAKK…HQKQ) and 53 to 85 (ALAQ…TAGE). The span at 24–34 (SRKRSKVPKTH) shows a compositional bias: basic residues. A compositionally biased stretch (low complexity) spans 73–84 (AAFAVAGAATAG).

Belongs to the bystin family. As to quaternary structure, component of the 40S pre-ribosome. In terms of tissue distribution, highly expressed in flowers and at lower levels in roots, hypocotyls, stems, leaves, siliques and seeds.

The protein localises to the nucleus. The protein resides in the nucleolus. It is found in the nucleoplasm. In terms of biological role, essential protein required during embryogenesis and pollen development. Required for processing of 20S pre-rRNA precursor and biogenesis of 40S ribosomal subunits. The protein is Bystin of Arabidopsis thaliana (Mouse-ear cress).